The following is a 406-amino-acid chain: Proteasome-activating nucleotidase 1 (406 aa).

Acidic residues predominate over residues 1 to 12 (MTDTVEDVELPY). The segment at 1 to 20 (MTDTVEDVELPYDDSASQQD) is disordered. The stretch at 12-70 (YDDSASQQDKLEALEEQLSTLEEENEEMRDRLLDANAENNKYQQKLERLSHENKKLKQS) forms a coiled coil. ATP contacts are provided by residues 192–197 (GTGKTL) and H331. The tract at residues 385-406 (AREKLDQDSEPAAATDVSRTFA) is disordered. Positions 404–406 (TFA) are docks into pockets in the proteasome alpha-ring to cause gate opening.

The protein belongs to the AAA ATPase family. As to quaternary structure, homohexamer. The hexameric complex has a two-ring architecture resembling a top hat that caps the 20S proteasome core at one or both ends. Upon ATP-binding, the C-terminus of PAN interacts with the alpha-rings of the proteasome core by binding to the intersubunit pockets.

It localises to the cytoplasm. ATPase which is responsible for recognizing, binding, unfolding and translocation of substrate proteins into the archaeal 20S proteasome core particle. Is essential for opening the gate of the 20S proteasome via an interaction with its C-terminus, thereby allowing substrate entry and access to the site of proteolysis. Thus, the C-termini of the proteasomal ATPase function like a 'key in a lock' to induce gate opening and therefore regulate proteolysis. Unfolding activity requires energy from ATP hydrolysis, whereas ATP binding alone promotes ATPase-20S proteasome association which triggers gate opening, and supports translocation of unfolded substrates. The protein is Proteasome-activating nucleotidase 1 of Halobacterium salinarum (strain ATCC 700922 / JCM 11081 / NRC-1) (Halobacterium halobium).